The primary structure comprises 168 residues: Desumoylating isopeptidase 1 (168 aa).

The 143-residue stretch at 7–149 folds into the PPPDE domain; that stretch reads YPVKLYVYDL…FGQALRPLLD (143 aa). His38 is a catalytic residue. The Nuclear export signal 1 signature appears at 83 to 91; sequence IFLEYLSSL. The active site involves Cys108. A Nuclear export signal 2 motif is present at residues 139–153; the sequence is PFGQALRPLLDSIQI.

It belongs to the DeSI family. As to quaternary structure, homodimer. Interacts with UBQLN4; leading to the export of UBQLN4 from the nucleus.

Its subcellular location is the cytoplasm. It localises to the nucleus. The enzyme catalyses S-hexadecanoyl-L-cysteinyl-[protein] + H2O = L-cysteinyl-[protein] + hexadecanoate + H(+). Palmostatin B inhibits its palmitoyl protein thioesterase activity. Functionally, protease which deconjugates SUMO1, SUMO2 and SUMO3 from some substrate proteins. Has isopeptidase but not SUMO-processing activity. Desumoylates ZBTB46. Collaborates with UBQLN4 in the export of ubiquitinated proteins from the nucleus to the cytoplasm. Exhibits palmitoyl protein thioesterase (S-depalmitoylation) activity towards synthetic substrates 4-methylumbelliferyl-6-S-palmitoyl-beta-D-glucopyranoside and S-depalmitoylation probe 5 (DPP-5). This Homo sapiens (Human) protein is Desumoylating isopeptidase 1.